A 381-amino-acid chain; its full sequence is MVDQVQHPTIAQKAAGQFMRSSVSKDVQVGYQRPSMYQRHATYGNYSNAAFQFPPTSRMLATTASPVFVQTPGEKGFTNFALDFLMGGVSAAVSKTAAAPIERVKLLIQNQDEMIKAGRLSEPYKGIGDCFGRTIKDEGFGSLWRGNTANVIRYFPTQALNFAFKDYFKRLFNFKKDRDGYWKWFAGNLASGGAAGASSLLFVYSLDYARTRLANDAKAAKKGGGGRQFDGLVDVYRKTLKTDGIAGLYRGFNISCVGIIVYRGLYFGLYDSVKPVLLTGDLQDSFFASFALGWVITNGAGLASYPIDTVRRRMMMTSGEAVKYKSSLDAFKQILKNEGAKSLFKGAGANILRAVAGAGVLSGYDKLQLIVFGKKYGSGGA.

A mitochondrion-targeting transit peptide spans 1–70 (MVDQVQHPTI…ATTASPVFVQ (70 aa)). Solcar repeat units follow at residues 78-171 (TNFA…FKRL), 183-276 (KWFA…VKPV), and 284-370 (DSFF…LQLI). The next 5 membrane-spanning stretches (helical) occupy residues 80-107 (FALD…VKLL), 148-172 (TANV…KRLF), 181-201 (YWKW…SSLL), 252-273 (FNIS…YDSV), and 287-307 (FASF…SYPI). ADP is bound by residues arginine 153 and lysine 165. Residue arginine 311 coordinates ADP. The segment at 311–316 (RRRMMM) is important for transport activity. Positions 311–316 (RRRMMM) match the Nucleotide carrier signature motif motif. The helical transmembrane segment at 347–367 (AGANILRAVAGAGVLSGYDKL) threads the bilayer.

It belongs to the mitochondrial carrier (TC 2.A.29) family. Monomer.

Its subcellular location is the mitochondrion inner membrane. The catalysed reaction is ADP(in) + ATP(out) = ADP(out) + ATP(in). Its activity is regulated as follows. The matrix-open state (m-state) is inhibited by the membrane-permeable bongkrekic acid (BKA). The cytoplasmic-open state (c-state) is inhibited by the membrane-impermeable toxic inhibitor carboxyatractyloside (CATR). Functionally, ADP:ATP antiporter that mediates import of ADP into the mitochondrial matrix for ATP synthesis, and export of ATP out to fuel the cell. Cycles between the cytoplasmic-open state (c-state) and the matrix-open state (m-state): operates by the alternating access mechanism with a single substrate-binding site intermittently exposed to either the cytosolic (c-state) or matrix (m-state) side of the inner mitochondrial membrane. The sequence is that of ADP,ATP carrier protein 1, mitochondrial (AAC1) from Arabidopsis thaliana (Mouse-ear cress).